A 603-amino-acid chain; its full sequence is MCSISQKVVIGLNKAAANNNLQNLDRRGFKTRCVSSSKAASCLRASCSLQLDVKPAQEGRRSGNYQPSIWDFNYVQSLNTPYKEERYLTRHAELIVQVKPLLEKKMEAAQQLELIDDLNNLGLSYFFQDRIKQILSFIYDENQCFHSNINDQAEKRDLYFTALGFKLLRQHGFDVSQEVFDCFKNDNGSDFKASLSDNTKGLLQLYEASFLVREGEDTLEQARQFATKFLRRKLDEIDDNHLLSCIHHSLEIPLHWRIQRLEARWFLDAYATRHDMNPAILELAKLDFNIIQATHQEELKDVSRWWQNTRLAEKLPFVRDRLVESYFWAIALFEPHQYGYQRRVAAKIITLATSIDDVYDIYGTLDELQLFTDNFRRWDTESLGIPPYSMQLFYMVIHNFVSELACEILKEKGFIVIPYLQRSWIDLAESFLKEANWYYSGYTPSLEEYIDNGSVSIGAVAVLSQVYFTLANSIEKPKIESMYKYHHILRLSGLLVRLHDDLGTSLFEKKRGDVPKAVEICMKERNVTEEEAEEHVKYLIREAWKEMNTATAAAGCPFMDELNVAAANLGRAAQFVYLDGDGHGVQHSKIHQQMGGLMFEPYL.

Residues 1-35 (MCSISQKVVIGLNKAAANNNLQNLDRRGFKTRCVS) constitute a chloroplast transit peptide. Residues R319, D356, D360, R497, and D500 each contribute to the (2E)-geranyl diphosphate site. The Mg(2+) site is built by D356 and D360. The DDXXD motif motif lies at 356-360 (DDVYD). Positions 500, 504, and 508 each coordinate Mg(2+).

The protein belongs to the terpene synthase family. Tpsb subfamily. In terms of assembly, monomer. The cofactor is Mg(2+). Mn(2+) is required as a cofactor.

The protein localises to the plastid. It is found in the chloroplast. The enzyme catalyses (2E)-geranyl diphosphate + H2O = (2E)-geraniol + diphosphate. The protein operates within secondary metabolite biosynthesis; terpenoid biosynthesis. Monoterpene synthase (mono-TPS) involved in the biosynthesis of monoterpenes natural products. Catalyzes the conversion of (2E)-geranyl diphosphate (GPP) into geraniol. The protein is Geraniol synthase Tps-5073G30, chloroplastic of Perilla frutescens (Beefsteak mint).